Reading from the N-terminus, the 82-residue chain is MNNPRGAFVQGAEAYGRFLEVFIDGHWWVVGDALENIGKTTKRLGANAYPHLYGGSSGLKGSSPKYSGYATPSKEVKSRFEK.

A bacteriochlorophyll c is bound at residue H26. Residues 55 to 82 form a disordered region; that stretch reads GSSGLKGSSPKYSGYATPSKEVKSRFEK. The segment covering 59-69 has biased composition (low complexity); sequence LKGSSPKYSGY.

Belongs to the BChl C/E-binding protein family.

The protein localises to the chlorosome. It localises to the chlorosome envelope. In terms of biological role, component of the photosynthetic apparatus. The light harvesting B740 complex binds bacteriochlorophyll c. This is Chlorosome protein E (csmE) from Chlorobaculum tepidum (strain ATCC 49652 / DSM 12025 / NBRC 103806 / TLS) (Chlorobium tepidum).